A 100-amino-acid polypeptide reads, in one-letter code: Cell division topological specificity factor (100 aa).

This sequence belongs to the MinE family.

Prevents the cell division inhibition by proteins MinC and MinD at internal division sites while permitting inhibition at polar sites. This ensures cell division at the proper site by restricting the formation of a division septum at the midpoint of the long axis of the cell. In Synechococcus sp. (strain JA-2-3B'a(2-13)) (Cyanobacteria bacterium Yellowstone B-Prime), this protein is Cell division topological specificity factor.